A 215-amino-acid chain; its full sequence is MKTILVTGFDPFGGEIVNPAWESVKELGKIESDLYKVELRQIPTVFEKSIEHLYAAIEETKPDIVLCIGQAGGRGDIAVERVAINVNDARIPDNEGNQPIDTPIRENGPTGYWSTLPIKAIVHELKQKGIPASISQTAGTYVCNHLFYGLMHYLAEKKASVRGGFIHIPYLPEQAARQADQPSMALETIVKGLQLAIETTISHDRDIVMEGGQIS.

Catalysis depends on residues glutamate 80, cysteine 143, and histidine 167.

Belongs to the peptidase C15 family. Homotetramer.

The protein localises to the cytoplasm. It catalyses the reaction Release of an N-terminal pyroglutamyl group from a polypeptide, the second amino acid generally not being Pro.. Functionally, removes 5-oxoproline from various penultimate amino acid residues except L-proline. The chain is Pyrrolidone-carboxylate peptidase from Brevibacillus brevis (strain 47 / JCM 6285 / NBRC 100599).